Reading from the N-terminus, the 481-residue chain is MDLSNLTLTKIQELVLTRKCKIYDILLAYKNNYELNKDINGYIEFFDDSLEIAKRYDDCLKNCELEDLPLIGMLIAVKDNISIQDKSLTCASEILKGYISPYDATVIKRLKNKGAILIGRTNMDEFAMGSTCEFSYYGATLNPLNREYVIGGSSGGSAAVVAAFQAPFSLGSDTGGSVRLPASFSGILGFKPSYGGLSRYGLASYASSFDQIGFFSHSIEDIALILKHTCGSDKMDSTSVDIFDDFYPLKIESLQGKNLAVIKELSEDLMDKNVANSFAKFKLDLLSKGINIKEVSIEEINFILSIYYIISPVEASSNLARYTGLCYGKRISEGLSLNDFYFKHRSNFLSEEVKRRIVLGNYLLSERYDSKYYAKACEILQNLIIPKFNKLFESCDFIITPTSFVKPFRLGLDFDDPVKMYYSDICTVIANLIGAPAISLPYSKDEEGLSIGMQIIGRSKKDFELLSFSKNVIRELGLNGI.

Catalysis depends on charge relay system residues Lys-78 and Ser-153. Residue Ser-177 is the Acyl-ester intermediate of the active site.

The protein belongs to the amidase family. GatA subfamily. Heterotrimer of A, B and C subunits.

It catalyses the reaction L-glutamyl-tRNA(Gln) + L-glutamine + ATP + H2O = L-glutaminyl-tRNA(Gln) + L-glutamate + ADP + phosphate + H(+). Functionally, allows the formation of correctly charged Gln-tRNA(Gln) through the transamidation of misacylated Glu-tRNA(Gln) in organisms which lack glutaminyl-tRNA synthetase. The reaction takes place in the presence of glutamine and ATP through an activated gamma-phospho-Glu-tRNA(Gln). This chain is Glutamyl-tRNA(Gln) amidotransferase subunit A (gatA), found in Borreliella burgdorferi (strain ATCC 35210 / DSM 4680 / CIP 102532 / B31) (Borrelia burgdorferi).